The primary structure comprises 322 residues: Pantothenate kinase (322 aa).

100–107 (GSVAVGKS) provides a ligand contact to ATP.

Belongs to the prokaryotic pantothenate kinase family.

Its subcellular location is the cytoplasm. The enzyme catalyses (R)-pantothenate + ATP = (R)-4'-phosphopantothenate + ADP + H(+). It functions in the pathway cofactor biosynthesis; coenzyme A biosynthesis; CoA from (R)-pantothenate: step 1/5. This Brucella canis (strain ATCC 23365 / NCTC 10854 / RM-666) protein is Pantothenate kinase.